Consider the following 30-residue polypeptide: Propionyl-CoA carboxylase alpha chain (30 aa).

In terms of domain architecture, Biotin carboxylation spans 1–30 (PKIRKVLVANRGEIAIRVMRTXKELGIATV).

As to quaternary structure, dodecamer composed of six biotin-containing alpha subunits and six beta subunits. It depends on Mg(2+) as a cofactor. Requires Mn(2+) as cofactor. Biotin is required as a cofactor.

The catalysed reaction is propanoyl-CoA + hydrogencarbonate + ATP = (S)-methylmalonyl-CoA + ADP + phosphate + H(+). Its pathway is metabolic intermediate metabolism; propanoyl-CoA degradation; succinyl-CoA from propanoyl-CoA: step 1/3. Its function is as follows. This is one of the 2 subunits of the biotin-dependent propionyl-CoA carboxylase (PCC), the enzyme catalyzing the carboxylation of propionyl-CoA/propanoyl-CoA to D-methylmalonyl-CoA/(S)-methylmalonyl-CoA. Within the holoenzyme, the alpha subunit catalyzes the ATP-dependent carboxylation of the biotin carried by the biotin carboxyl carrier (BCC) domain, while the beta subunit then transfers the carboxyl group from carboxylated biotin to propionyl-CoA. Propionyl-CoA carboxylase also carboxylates acetyl-CoA, butyryl-CoA and succinyl-CoA. This chain is Propionyl-CoA carboxylase alpha chain, found in Myxococcus xanthus.